We begin with the raw amino-acid sequence, 161 residues long: Beta-lactoglobulin-1 (161 aa).

2 cysteine pairs are disulfide-bonded: C66–C159 and C106–C119.

It belongs to the calycin superfamily. Lipocalin family. As to quaternary structure, monomer. In terms of tissue distribution, synthesized in mammary gland and secreted in milk.

Its subcellular location is the secreted. In terms of biological role, primary component of whey, it binds retinol and is probably involved in the transport of that molecule. This chain is Beta-lactoglobulin-1 (LGB1), found in Canis lupus familiaris (Dog).